A 117-amino-acid polypeptide reads, in one-letter code: Non-specific lipid-transfer protein 2B (117 aa).

The N-terminal stretch at 1-25 is a signal peptide; that stretch reads MARAQLVLVALVAALLLAGPHTTMA. Cystine bridges form between C29–C76, C39–C53, C54–C99, and C74–C113.

It belongs to the plant LTP family. In terms of tissue distribution, expressed in roots, mesocotyls and developing leaves.

Its function is as follows. Plant non-specific lipid-transfer proteins transfer phospholipids as well as galactolipids across membranes. May play a role in wax or cutin deposition in the cell walls of expanding epidermal cells and certain secretory tissues. In Oryza sativa subsp. japonica (Rice), this protein is Non-specific lipid-transfer protein 2B (LTP2-B).